The primary structure comprises 89 residues: MMTGTLGTLVPIILMFAVLYFLLIRPQQKQQKAVRQMQEELKKGDSVVTIGGLHGTVDSIDESKVVIKTGDNTRLTFDRRAIREVSAAE.

Residues 4–24 (GTLGTLVPIILMFAVLYFLLI) form a helical membrane-spanning segment.

This sequence belongs to the YajC family. In terms of assembly, part of the SecDF-YidC-YajC translocase complex. The SecDF-YidC-YajC translocase forms a supercomplex with SecYEG, called the holo-translocon (HTL).

The protein resides in the cell membrane. Its function is as follows. The SecYEG-SecDF-YajC-YidC holo-translocon (HTL) protein secretase/insertase is a supercomplex required for protein secretion, insertion of proteins into membranes, and assembly of membrane protein complexes. While the SecYEG complex is essential for assembly of a number of proteins and complexes, the SecDF-YajC-YidC subcomplex facilitates these functions. This Bacillus subtilis (strain 168) protein is Sec translocon accessory complex subunit YrbF (yrbF).